The chain runs to 194 residues: dCTP deaminase (194 aa).

DCTP-binding positions include 110–115 (RSSLAR), Asp-128, 136–138 (VLE), Tyr-171, Lys-178, and Gln-182. Residue Glu-138 is the Proton donor/acceptor of the active site. A disordered region spans residues 169-194 (RPYNKRDNAKYKDQTSAVGSRISGEN). A compositionally biased stretch (basic and acidic residues) spans 170 to 181 (PYNKRDNAKYKD). A compositionally biased stretch (polar residues) spans 182-194 (QTSAVGSRISGEN).

It belongs to the dCTP deaminase family. Homotrimer.

It catalyses the reaction dCTP + H2O + H(+) = dUTP + NH4(+). Its pathway is pyrimidine metabolism; dUMP biosynthesis; dUMP from dCTP (dUTP route): step 1/2. Catalyzes the deamination of dCTP to dUTP. This is dCTP deaminase from Marinomonas sp. (strain MWYL1).